Here is an 832-residue protein sequence, read N- to C-terminus: Spindle pole body component alp6 (832 aa).

Residues 1–186 form an interaction with mzt1 region; that stretch reads MSEIHVKTAL…STETSSVQHT (186 aa). T286 carries the phosphothreonine modification.

It belongs to the TUBGCP family. In terms of assembly, part of the gamma-tubulin complex. Interacts directly with mzt1. Interacts with mto1. Interacts with mto2.

It is found in the cytoplasm. The protein resides in the cytoskeleton. Its subcellular location is the microtubule organizing center. The protein localises to the spindle pole body. In terms of biological role, component of the gamma tubule complex that is required for the regulation of both interphase microtubules and mitotic bipolar spindles. The protein is Spindle pole body component alp6 (alp6) of Schizosaccharomyces pombe (strain 972 / ATCC 24843) (Fission yeast).